The following is a 107-amino-acid chain: Disintegrin lebestatin (107 aa).

The N-terminal stretch at 1-20 is a signal peptide; the sequence is MIQVLLVIICLAVFPFQGSS. The propeptide occupies 21-64; sequence KTLKSGNVNDYEVVNPGTVTGLPKGAVEEKHEPMKGNTLQKFPL. Cystine bridges form between C65–C74, C70–C93, C71–C98, and C83–C100. In terms of domain architecture, Disintegrin spans 65 to 105; it reads CTTGPCCRQCKLKPAGTTCWKTSRTSHYCTGKSCDCPSYPG. Positions 85 to 87 match the Cell attachment site; atypical (KTS) motif; that stretch reads KTS. Residues 106–107 constitute a propeptide that is removed on maturation; the sequence is NG.

In terms of assembly, monomer. Expressed by the venom gland.

The protein localises to the secreted. Specifically interacts with the alpha-1/beta-1 integrin (ITGA1/ITGB1). Exhibits highly inhibitory effects on cell adhesion and cell migration to collagens I and IV. Also shows in vivo anti-angiogenic activity. The polypeptide is Disintegrin lebestatin (Macrovipera lebetinus (Levantine viper)).